Consider the following 149-residue polypeptide: Flavodoxin YqcA (149 aa).

The region spanning 4 to 145 is the Flavodoxin-like domain; it reads IGIFVGTMYG…ESNPWVEQWG (142 aa). Residues 10–15 and 99–101 each bind FMN; these read TMYGNS and NFC.

This sequence belongs to the flavodoxin family. MioC subfamily. Monomer. Requires FMN as cofactor.

Functionally, probable electron transporter. This Escherichia coli (strain K12) protein is Flavodoxin YqcA (yqcA).